Reading from the N-terminus, the 311-residue chain is Transcription factor BIM2 (311 aa).

2 disordered regions span residues Met1 to Lys60 and Ala271 to Leu311. Basic and acidic residues-rich tracts occupy residues Ser33 to Ser44 and Ser51 to Lys60. The bHLH domain maps to Ala45–Leu95.

In terms of assembly, homodimer. Interacts with the N-terminus of BZR2/BES1. As to expression, expressed constitutively in roots, leaves, stems, and flowers.

Its subcellular location is the nucleus. In terms of biological role, positive brassinosteroid-signaling protein. The sequence is that of Transcription factor BIM2 (BIM2) from Arabidopsis thaliana (Mouse-ear cress).